Here is a 391-residue protein sequence, read N- to C-terminus: 1-deoxy-D-xylulose 5-phosphate reductoisomerase (391 aa).

The NADPH site is built by threonine 17, glycine 18, serine 19, isoleucine 20, asparagine 47, and asparagine 130. Lysine 131 is a 1-deoxy-D-xylulose 5-phosphate binding site. Glutamate 132 is a binding site for NADPH. Residue aspartate 156 coordinates Mn(2+). 4 residues coordinate 1-deoxy-D-xylulose 5-phosphate: serine 157, glutamate 158, serine 182, and histidine 205. Glutamate 158 is a Mn(2+) binding site. Glycine 211 lines the NADPH pocket. The 1-deoxy-D-xylulose 5-phosphate site is built by serine 218, asparagine 223, lysine 224, and glutamate 227. Glutamate 227 is a Mn(2+) binding site.

This sequence belongs to the DXR family. Mg(2+) serves as cofactor. Requires Mn(2+) as cofactor.

It catalyses the reaction 2-C-methyl-D-erythritol 4-phosphate + NADP(+) = 1-deoxy-D-xylulose 5-phosphate + NADPH + H(+). It participates in isoprenoid biosynthesis; isopentenyl diphosphate biosynthesis via DXP pathway; isopentenyl diphosphate from 1-deoxy-D-xylulose 5-phosphate: step 1/6. Functionally, catalyzes the NADPH-dependent rearrangement and reduction of 1-deoxy-D-xylulose-5-phosphate (DXP) to 2-C-methyl-D-erythritol 4-phosphate (MEP). This chain is 1-deoxy-D-xylulose 5-phosphate reductoisomerase, found in Sinorhizobium medicae (strain WSM419) (Ensifer medicae).